Reading from the N-terminus, the 344-residue chain is Phenylalanine--tRNA ligase alpha subunit (344 aa).

Residue Glu-256 coordinates Mg(2+).

Belongs to the class-II aminoacyl-tRNA synthetase family. Phe-tRNA synthetase alpha subunit type 1 subfamily. In terms of assembly, tetramer of two alpha and two beta subunits. Mg(2+) is required as a cofactor.

It is found in the cytoplasm. The enzyme catalyses tRNA(Phe) + L-phenylalanine + ATP = L-phenylalanyl-tRNA(Phe) + AMP + diphosphate + H(+). The polypeptide is Phenylalanine--tRNA ligase alpha subunit (pheS) (Halalkalibacterium halodurans (strain ATCC BAA-125 / DSM 18197 / FERM 7344 / JCM 9153 / C-125) (Bacillus halodurans)).